Here is a 590-residue protein sequence, read N- to C-terminus: Protein ecdysoneless homolog (590 aa).

A disordered region spans residues 445–464 (EDFYGVKNSDTDTDSDSLAD). A compositionally biased stretch (acidic residues) spans 455–464 (TDTDSDSLAD).

The protein belongs to the ECD family.

The protein localises to the cytoplasm. It localises to the nucleus. Its function is as follows. Involved in the regulation of carbohydrate metabolism. May act as a transcription factor. The sequence is that of Protein ecdysoneless homolog from Schizosaccharomyces pombe (strain 972 / ATCC 24843) (Fission yeast).